The sequence spans 515 residues: Portal protein (515 aa).

The protein belongs to the podoviridae head-to-tail connector protein family. In terms of assembly, homododecamer.

The protein localises to the virion. Its function is as follows. Forms the portal vertex of the capsid. This portal plays critical roles in head assembly, genome packaging, neck/tail attachment, and genome ejection. The portal protein multimerizes as a single ring-shaped homododecamer arranged around a central channel. This Salmonella typhimurium (Bacteriophage SP6) protein is Portal protein.